The primary structure comprises 322 residues: Germ cell-specific gene 1-like protein (322 aa).

Residues 1–8 (MELSRRNR) lie on the Cytoplasmic side of the membrane. The helical transmembrane segment at 9–29 (SLLSVVLNLLALSFSVAAFFT) threads the bilayer. At 30–125 (SYWCEGTHKV…IELSPDSEKG (96 aa)) the chain is on the extracellular side. Residues 126–146 (VLWLSVISEFLYIILLSLGFL) form a helical membrane-spanning segment. Residues 147-166 (LMCLEFFSSSNFIDGLKINA) lie on the Cytoplasmic side of the membrane. The chain crosses the membrane as a helical span at residues 167–187 (FAAIITVLSGLLGMVAHMMYM). The Extracellular segment spans residues 188–209 (TVFQVTVNLGPKDWRPQTWYYG). A helical transmembrane segment spans residues 210–230 (WSFGLAWLSFTLCMSASVLTL). Over 231–322 (NTYTKTILEF…MDLEDDGDQC (92 aa)) the chain is Cytoplasmic.

This sequence belongs to the GSG1 family. In terms of assembly, component of the AMPAR complex.

It localises to the cell membrane. The protein resides in the synapse. In terms of biological role, as a component of the AMPAR complex, modifies AMPA receptor (AMPAR) gating. This is Germ cell-specific gene 1-like protein (gsg1l) from Xenopus tropicalis (Western clawed frog).